A 1641-amino-acid chain; its full sequence is Ophiophagus venom factor (1641 aa).

Positions 1-22 (MEGMALYLVAALLIGFPGSSHG) are cleaved as a signal peptide. N-linked (GlcNAc...) asparagine glycosylation is found at asparagine 181 and asparagine 209. Mg(2+)-binding residues include proline 507, aspartate 530, valine 531, and aspartate 533. Cystine bridges form between cysteine 535–cysteine 796, cysteine 604–cysteine 639, cysteine 672–cysteine 699, cysteine 673–cysteine 706, cysteine 686–cysteine 707, cysteine 852–cysteine 1491, cysteine 1336–cysteine 1467, cysteine 1367–cysteine 1436, cysteine 1484–cysteine 1489, cysteine 1496–cysteine 1568, cysteine 1515–cysteine 1639, and cysteine 1615–cysteine 1624. A propeptide spanning residues 645 to 728 (RRRRSSVLLL…WESGLFLPRN (84 aa)) is cleaved from the precursor. The interval 649 to 727 (SSVLLLDSKA…QWESGLFLPR (79 aa)) is C3a-like domain. One can recognise an Anaphylatoxin-like domain in the interval 672-707 (CCEDSMHENPMGYTCEKRAKYIQEGDACKAAFLECC). A factor B binding site region spans residues 731–742 (EDGFIQDSDIIP). Positions 981–1259 (HLIITPSGCG…VMLFQALAEY (279 aa)) are excised as a propeptide. The C3d-like domain stretch occupies residues 981–1259 (HLIITPSGCG…VMLFQALAEY (279 aa)). Positions 989–992 (CGEQ) form a cross-link, isoglutamyl cysteine thioester (Cys-Gln). The factor H binding site stretch occupies residues 1186-1249 (VLMAASTGKN…GGTYGQTQAT (64 aa)). Residues 1496-1639 (CSLLSQQEKI…LSNILTIFGC (144 aa)) form the NTR domain.

Belongs to the venom complement C3 homolog family. Heterotrimer of alpha, beta and gamma chains; disulfide-linked. May be active with factor B in the presence of factor D. In terms of processing, first processed by the removal of 4 Arg residues by furin-type protease, forming two chains, alpha and gamma/beta precursor, linked by a disulfide bond. Probably, a cobrin-like protease cleaves the C3a-like domain and then the C3d-like domain, generating the mature venom factor (OVF). Post-translationally, the beta chain is not glycosylated. Expressed by the venom gland.

The protein resides in the secreted. Its function is as follows. Complement-activating protein in cobra venom. It is a structural and functional analog of complement component C3b, the activated form of C3. It binds factor B (CFB), which is subsequently cleaved by factor D (CFD) to form the bimolecular complex OVF/Bb. OVF/Bb is a C3/C5 convertase that cleaves both complement components C3 and C5. Structurally, it resembles the C3b degradation product C3c, which is not able to form a C3/C5 convertase. Unlike C3b/Bb, OVF/Bb is a stable complex and completely resistant to the actions of complement regulatory factors H (CFH) and I (CFI). Therefore, OVF continuously activates complement. As a result, OVF exhibits complement-depleting activity. The sequence is that of Ophiophagus venom factor from Ophiophagus hannah (King cobra).